The following is a 640-amino-acid chain: G protein-coupled receptor kinase 1 (640 aa).

The interval 1-201 (MEIENIVANT…LEKRPVDKHT (201 aa)) is N-terminal. Residues 52 to 187 (YAFVVEKQPI…IQTMYFHRFL (136 aa)) form the RGS domain. The 268-residue stretch at 202-469 (FRLYRVLGKG…AEEIRAHPFF (268 aa)) folds into the Protein kinase domain. Residues 208–216 (LGKGGFGEV) and Lys231 each bind ATP. Catalysis depends on Asp327, which acts as the Proton acceptor. The 66-residue stretch at 479 to 544 (EPVPWKKMEA…GCVSIPWQSE (66 aa)) folds into the AGC-kinase C-terminal domain. The disordered stretch occupies residues 610 to 640 (GVDQQQPSTSAKPAAVRSSRAASASGRTSMI). Over residues 619 to 640 (SAKPAAVRSSRAASASGRTSMI) the composition is skewed to low complexity.

Belongs to the protein kinase superfamily. AGC Ser/Thr protein kinase family. GPRK subfamily.

It carries out the reaction [G-protein-coupled receptor] + ATP = [G-protein-coupled receptor]-phosphate + ADP + H(+). In terms of biological role, specifically phosphorylates the activated forms of G protein-coupled receptors. This is G protein-coupled receptor kinase 1 (grk-1) from Caenorhabditis briggsae.